A 429-amino-acid polypeptide reads, in one-letter code: MEIIYEEFKEALSKIKVLRENANIIEETVQRSVREIIRHVREGKDEALSFYTKKFDGVEMKNFRVSEEEIQQASMFVENSFLEALKEAKKNVVSYHEKQKKHSIFDCESKGIIRGQLIRPLENIGVYVPGGTASYPSSVLMNVLPAKLAGVKKIVMVTPPRKGGIDPHILAAADLAGVDEIYTIGGAQAIAALAYGTESIPKVDKIVGPGNLYVALAKREVYGIVNIDMIAGPSEIVVVADETGNAKYIAADLLSQAEHDERATAICITTNMELAKEVEKEVERQLETLPRSEIARESINRNGAIFIVPSLEEALKLSNEIAPEHLELHIKEPMNALDYVKHAGSIFLGPYSPEPLGDYLAGPNHVLPTSGTARFFSPLSVDDFVKKSSFISYTEEALKNVQHHIVELANKEGLHAHARAIQIRFEEEK.

Tyr127, Gln188, and Asn211 together coordinate NAD(+). Substrate contacts are provided by Ser234, Gln256, and His259. Zn(2+) is bound by residues Gln256 and His259. Residues Glu324 and His325 each act as proton acceptor in the active site. Residues His325, Asp358, Glu412, and His417 each coordinate substrate. A Zn(2+)-binding site is contributed by Asp358. His417 provides a ligand contact to Zn(2+).

This sequence belongs to the histidinol dehydrogenase family. Zn(2+) serves as cofactor.

It carries out the reaction L-histidinol + 2 NAD(+) + H2O = L-histidine + 2 NADH + 3 H(+). It participates in amino-acid biosynthesis; L-histidine biosynthesis; L-histidine from 5-phospho-alpha-D-ribose 1-diphosphate: step 9/9. In terms of biological role, catalyzes the sequential NAD-dependent oxidations of L-histidinol to L-histidinaldehyde and then to L-histidine. The sequence is that of Histidinol dehydrogenase from Bacillus cereus (strain ATCC 14579 / DSM 31 / CCUG 7414 / JCM 2152 / NBRC 15305 / NCIMB 9373 / NCTC 2599 / NRRL B-3711).